Here is a 1502-residue protein sequence, read N- to C-terminus: Clustered mitochondria protein homolog (1502 aa).

Disordered regions lie at residues 1 to 62 (MSES…EPLD), 571 to 615 (AQAE…NPMM), 755 to 799 (AEAE…EEDR), 1054 to 1085 (KDQEEEENKREENIKSKEKKKGSKAGAKGETV), 1381 to 1403 (ARERIGGGAASTSRPTGIRRLGG), and 1429 to 1502 (GQGG…GAKR). The segment covering 7–35 (AAAQNGQAEEQQLQQQLDEQQQLEEQQQL) has biased composition (low complexity). Positions 53-62 (KPKDSTEPLD) are enriched in basic and acidic residues. Positions 399–693 (EILRTQLAFL…RLAPVDVEWL (295 aa)) constitute a Clu domain. The span at 575 to 586 (TEAEAETADAVE) shows a compositional bias: acidic residues. A compositionally biased stretch (basic and acidic residues) spans 587–606 (GEQKKEDWVDVEKPTEKSGS). Over residues 781 to 792 (EEQSAAASAAAA) the composition is skewed to low complexity. The span at 1054–1069 (KDQEEEENKREENIKS) shows a compositional bias: basic and acidic residues. The span at 1429 to 1451 (GQGGNPSANAAAATAGQGEQANG) shows a compositional bias: low complexity. Residues 1462–1471 (RGTESLEELV) are compositionally biased toward basic and acidic residues. Residues 1486–1502 (KRGKNALRGKRRTGAKR) are compositionally biased toward basic residues.

The protein belongs to the CLU family. May associate with the eukaryotic translation initiation factor 3 (eIF-3) complex.

The protein resides in the cytoplasm. Its function is as follows. mRNA-binding protein involved in proper cytoplasmic distribution of mitochondria. This Cryptococcus neoformans var. neoformans serotype D (strain B-3501A) (Filobasidiella neoformans) protein is Clustered mitochondria protein homolog.